Here is a 491-residue protein sequence, read N- to C-terminus: Proline--tRNA ligase (491 aa).

Belongs to the class-II aminoacyl-tRNA synthetase family. ProS type 3 subfamily. In terms of assembly, homodimer.

It is found in the cytoplasm. The catalysed reaction is tRNA(Pro) + L-proline + ATP = L-prolyl-tRNA(Pro) + AMP + diphosphate. In terms of biological role, catalyzes the attachment of proline to tRNA(Pro) in a two-step reaction: proline is first activated by ATP to form Pro-AMP and then transferred to the acceptor end of tRNA(Pro). In Amoebophilus asiaticus (strain 5a2), this protein is Proline--tRNA ligase.